We begin with the raw amino-acid sequence, 177 residues long: uncharacterized protein (177 aa).

This sequence to Synechocystis PCC 6803 slr1290 and sll0925.

This is an uncharacterized protein from Synechocystis sp. (strain ATCC 27184 / PCC 6803 / Kazusa).